A 592-amino-acid polypeptide reads, in one-letter code: MAAAAVVAATVPAQSMGADGASSVHWFRKGLRLHDNPALLAAVRGARCVRCVYILDPWFAASSSVGINRWRFLLQSLEDLDTSLRKLNSRLFVVRGQPADVFPRLFKEWGVTRLTFEYDSEPFGKERDAAIMKMAKEAGVEVVTENSHTLYDLDRIIELNGQKPPLTYKRFQALISRMELPKKPAVAVSSQQMESCRAEIQENHDDTYGVPSLEELGFPTEGLGPAVWQGGETEALARLDKHLERKAWVANYERPRMNANSLLASPTGLSPYLRFGCLSCRLFYYRLWDLYKKVKRNSTPPLSLFGQLLWREFFYTAATNNPRFDRMEGNPICIQIPWDRNPEALAKWAEGKTGFPWIDAIMTQLRQEGWIHHLARHAVACFLTRGDLWVSWESGVRVFDELLLDADFSVNAGSWMWLSCSAFFQQFFHCYCPVGFGRRTDPSGDYIRRYLPKLKGFPSRYIYEPWNAPESVQKAAKCIIGVDYPRPIVNHAETSRLNIERMKQIYQQLSRYRGLCLLASVPSCVEDLSHPVAEPGSSQAGSISNTGPRALSSGPASPKRKLEAAEEPPGEELTKRARVTEMPTQEPASKDS.

One can recognise a Photolyase/cryptochrome alpha/beta domain in the interval 21–150 (ASSVHWFRKG…EVVTENSHTL (130 aa)). A Glycyl lysine isopeptide (Lys-Gly) (interchain with G-Cter in ubiquitin) cross-link involves residue Lys29. Residue Ser89 is modified to Phosphoserine. Residues Lys125 and Lys241 each participate in a glycyl lysine isopeptide (Lys-Gly) (interchain with G-Cter in ubiquitin) cross-link. Ser265 carries the phosphoserine; by MAPK modification. Residue Ser270 coordinates FAD. At Ser298 the chain carries Phosphoserine. Gln307 lines the FAD pocket. Residue Lys347 forms a Glycyl lysine isopeptide (Lys-Gly) (interchain with G-Cter in ubiquitin) linkage. FAD contacts are provided by residues His373 and 405–407 (DAD). The interval 389–488 (WVSWESGVRV…IIGVDYPRPI (100 aa)) is required for inhibition of CLOCK-BMAL1-mediated transcription. Residues Lys474 and Lys503 each participate in a glycyl lysine isopeptide (Lys-Gly) (interchain with G-Cter in ubiquitin) cross-link. Positions 532 to 592 (VAEPGSSQAG…PTQEPASKDS (61 aa)) are disordered. Polar residues predominate over residues 536–547 (GSSQAGSISNTG). Ser553 bears the Phosphoserine; by GSK3-beta mark. Ser557 bears the Phosphoserine; by DYRK1A and MAPK mark. Over residues 582–592 (MPTQEPASKDS) the composition is skewed to polar residues.

The protein belongs to the DNA photolyase class-1 family. Component of the circadian core oscillator, which includes the CRY proteins, CLOCK or NPAS2, BMAL1 or BMAL2, CSNK1D and/or CSNK1E, TIMELESS, and the PER proteins. Interacts with TIMELESS. Interacts directly with PER1, PER2 and PER3; interaction with PER2 inhibits its ubiquitination and vice versa. Interacts with CLOCK-BMAL1. Interacts with BMAL1. Interacts with CLOCK. Interacts with NFIL3. Interacts with FBXL3 and FBXL21. FBXL3, PER2 and the cofactor FAD compete for overlapping binding sites. FBXL3 cannot bind CRY2 that interacts already with PER2 or that contains bound FAD. Interacts with PPP5C (via TPR repeats); the interaction down-regulates the PPP5C phosphatase activity on CSNK1E. Interacts with nuclear receptors AR and NR3C1/GR; the interaction is ligand dependent. Interacts with PRKDC. Interacts with CIART. Interacts with DDB1, USP7 and TARDBP. Interacts with HNF4A. Interacts with PPARA. Interacts with PPARG in a ligand-dependent manner. Interacts with PPARD (via domain NR LBD) in a ligand-dependent manner. Interacts with NR1I2 (via domain NR LBD) in a ligand-dependent manner. Interacts with NR1I3 and VDR in a ligand-dependent manner. FAD serves as cofactor. It depends on (6R)-5,10-methylene-5,6,7,8-tetrahydrofolate as a cofactor. Phosphorylation on Ser-265 by MAPK is important for the inhibition of CLOCK-BMAL1-mediated transcriptional activity. Phosphorylation by CSKNE requires interaction with PER1 or PER2. Phosphorylated in a circadian manner at Ser-553 and Ser-557 in the suprachiasmatic nucleus (SCN) and liver. Phosphorylation at Ser-557 by DYRK1A promotes subsequent phosphorylation at Ser-553 by GSK3-beta: the two-step phosphorylation at the neighboring Ser residues leads to its proteasomal degradation. In terms of processing, ubiquitinated by the SCF(FBXL3) and SCF(FBXL21) complexes, regulating the balance between degradation and stabilization. The SCF(FBXL3) complex is mainly nuclear and mediates ubiquitination and subsequent degradation of CRY2. In contrast, cytoplasmic SCF(FBXL21) complex-mediated ubiquitination leads to stabilize CRY2 and counteract the activity of the SCF(FBXL3) complex. The SCF(FBXL3) and SCF(FBXL21) complexes probably mediate ubiquitination at different Lys residues. The SCF(FBXL3) complex recognizes and binds CRY2 phosphorylated at Ser-553 and Ser-557. Ubiquitination may be inhibited by PER2. Deubiquitinated by USP7. As to expression, expression in the retina is restricted to the photoreceptor layer (at protein level). Expressed in all tissues examined including heart, brain, spleen, lung, liver, skeletal muscle, kidney and testis. Weak expression in spleen.

It is found in the cytoplasm. Its subcellular location is the nucleus. KL001 (N-[3-(9H-carbazol-9-yl)-2-hydroxypropyl]-N-(2-furanylmethyl)-methanesulfonamide) binds to CRY1 and stabilizes it by inhibiting FBXL3- and ubiquitin-dependent degradation of CRY1 resulting in lengthening of the circadian periods. KL001-mediated CRY1 stabilization can inhibit glucagon-induced gluconeogenesis in primary hepatocytes. Functionally, transcriptional repressor which forms a core component of the circadian clock. The circadian clock, an internal time-keeping system, regulates various physiological processes through the generation of approximately 24 hour circadian rhythms in gene expression, which are translated into rhythms in metabolism and behavior. It is derived from the Latin roots 'circa' (about) and 'diem' (day) and acts as an important regulator of a wide array of physiological functions including metabolism, sleep, body temperature, blood pressure, endocrine, immune, cardiovascular, and renal function. Consists of two major components: the central clock, residing in the suprachiasmatic nucleus (SCN) of the brain, and the peripheral clocks that are present in nearly every tissue and organ system. Both the central and peripheral clocks can be reset by environmental cues, also known as Zeitgebers (German for 'timegivers'). The predominant Zeitgeber for the central clock is light, which is sensed by retina and signals directly to the SCN. The central clock entrains the peripheral clocks through neuronal and hormonal signals, body temperature and feeding-related cues, aligning all clocks with the external light/dark cycle. Circadian rhythms allow an organism to achieve temporal homeostasis with its environment at the molecular level by regulating gene expression to create a peak of protein expression once every 24 hours to control when a particular physiological process is most active with respect to the solar day. Transcription and translation of core clock components (CLOCK, NPAS2, BMAL1, BMAL2, PER1, PER2, PER3, CRY1 and CRY2) plays a critical role in rhythm generation, whereas delays imposed by post-translational modifications (PTMs) are important for determining the period (tau) of the rhythms (tau refers to the period of a rhythm and is the length, in time, of one complete cycle). A diurnal rhythm is synchronized with the day/night cycle, while the ultradian and infradian rhythms have a period shorter and longer than 24 hours, respectively. Disruptions in the circadian rhythms contribute to the pathology of cardiovascular diseases, cancer, metabolic syndromes and aging. A transcription/translation feedback loop (TTFL) forms the core of the molecular circadian clock mechanism. Transcription factors, CLOCK or NPAS2 and BMAL1 or BMAL2, form the positive limb of the feedback loop, act in the form of a heterodimer and activate the transcription of core clock genes and clock-controlled genes (involved in key metabolic processes), harboring E-box elements (5'-CACGTG-3') within their promoters. The core clock genes: PER1/2/3 and CRY1/2 which are transcriptional repressors form the negative limb of the feedback loop and interact with the CLOCK|NPAS2-BMAL1|BMAL2 heterodimer inhibiting its activity and thereby negatively regulating their own expression. This heterodimer also activates nuclear receptors NR1D1/2 and RORA/B/G, which form a second feedback loop and which activate and repress BMAL1 transcription, respectively. CRY1 and CRY2 have redundant functions but also differential and selective contributions at least in defining the pace of the SCN circadian clock and its circadian transcriptional outputs. Less potent transcriptional repressor in cerebellum and liver than CRY1, though less effective in lengthening the period of the SCN oscillator. Seems to play a critical role in tuning SCN circadian period by opposing the action of CRY1. With CRY1, dispensable for circadian rhythm generation but necessary for the development of intercellular networks for rhythm synchrony. May mediate circadian regulation of cAMP signaling and gluconeogenesis by blocking glucagon-mediated increases in intracellular cAMP concentrations and in CREB1 phosphorylation. Besides its role in the maintenance of the circadian clock, is also involved in the regulation of other processes. Plays a key role in glucose and lipid metabolism modulation, in part, through the transcriptional regulation of genes involved in these pathways, such as LEP or ACSL4. Represses glucocorticoid receptor NR3C1/GR-induced transcriptional activity by binding to glucocorticoid response elements (GREs). Represses the CLOCK-BMAL1 induced transcription of BHLHE40/DEC1 and NAMPT. Represses PPARD and its target genes in the skeletal muscle and limits exercise capacity. Represses the transcriptional activity of NR1I2. This chain is Cryptochrome-2 (Cry2), found in Mus musculus (Mouse).